The following is a 316-amino-acid chain: Ribosomal RNA small subunit methyltransferase H (316 aa).

Residues 35-37 (AGH), D55, F84, D105, and Q112 contribute to the S-adenosyl-L-methionine site.

It belongs to the methyltransferase superfamily. RsmH family.

The protein resides in the cytoplasm. It carries out the reaction cytidine(1402) in 16S rRNA + S-adenosyl-L-methionine = N(4)-methylcytidine(1402) in 16S rRNA + S-adenosyl-L-homocysteine + H(+). Functionally, specifically methylates the N4 position of cytidine in position 1402 (C1402) of 16S rRNA. In Streptococcus thermophilus (strain ATCC BAA-250 / LMG 18311), this protein is Ribosomal RNA small subunit methyltransferase H.